Consider the following 248-residue polypeptide: 2,3-dihydro-2,3-dihydroxybenzoate dehydrogenase (248 aa).

Residue 9–33 (WVTGAGKGIGYATALAFVEAGAKVT) coordinates NAD(+). S131 is a substrate binding site. Y144 serves as the catalytic Proton acceptor.

Belongs to the short-chain dehydrogenases/reductases (SDR) family. As to quaternary structure, homotetramer; dimer of dimers. EntA and EntE interact together.

The catalysed reaction is (2S,3S)-2,3-dihydroxy-2,3-dihydrobenzoate + NAD(+) = 2,3-dihydroxybenzoate + NADH + H(+). It functions in the pathway siderophore biosynthesis; enterobactin biosynthesis. Its activity is regulated as follows. Inhibited by cis-2-hydroxy-3-cyclohexen-1-carboxylate, cis-2-hydroxycyclohexane-1-carboxylate and trans-2-hydroxycyclohexane-1-carboxylate. Involved in the biosynthesis of the siderophore enterobactin (enterochelin), which is a macrocyclic trimeric lactone of N-(2,3-dihydroxybenzoyl)-serine. Catalyzes the reversible NAD-dependent oxidation of the C3-hydroxyl group of 2,3-dihydro-2,3-dihydroxybenzoate (2,3-diDHB), producing the transient intermediate 2-hydroxy-3-oxo-4,6-cyclohexadiene-1-carboxylate, which undergoes rapid aromatization to the final product, 2,3-dihydroxybenzoate (2,3-DHB). Only the compounds with a C3-hydroxyl group such as methyl 2,3-dihydro-2,3-dihydroxybenzoate, methyl-3-hydroxy-1,4-cyclohexadiene-1-carboxylate, trans-3-hydroxy-2-cyclohexene-1-carboxylate, cis-3-hydroxy-4-cyclohexene-1-carboxylate, cis-3-hydroxycyclohexane-1-carboxylic acid are oxidized to the corresponding ketone products. The stereospecificity of the C3 allylic alcohol group oxidation is 3R in a 1R,3R dihydro substrate. It can also increase the DHB-AMP ligase activity of EntE by interaction EntE. The polypeptide is 2,3-dihydro-2,3-dihydroxybenzoate dehydrogenase (Escherichia coli (strain K12)).